Reading from the N-terminus, the 745-residue chain is Elongation factor G, mitochondrial (745 aa).

Residues 40-317 (EKIRNIGISA…AVLDYLPNPG (278 aa)) form the tr-type G domain. GTP is bound by residues 49-56 (AHIDSGKT), 116-120 (DTPGH), and 170-173 (NKLD).

This sequence belongs to the TRAFAC class translation factor GTPase superfamily. Classic translation factor GTPase family. EF-G/EF-2 subfamily.

It is found in the mitochondrion. It functions in the pathway protein biosynthesis; polypeptide chain elongation. Its function is as follows. Mitochondrial GTPase that catalyzes the GTP-dependent ribosomal translocation step during translation elongation. During this step, the ribosome changes from the pre-translocational (PRE) to the post-translocational (POST) state as the newly formed A-site-bound peptidyl-tRNA and P-site-bound deacylated tRNA move to the P and E sites, respectively. Catalyzes the coordinated movement of the two tRNA molecules, the mRNA and conformational changes in the ribosome. Essential during development as it acts as a retrograde signal from mitochondria to the nucleus to slow down cell proliferation if mitochondrial energy output is low. In Drosophila willistoni (Fruit fly), this protein is Elongation factor G, mitochondrial.